A 260-amino-acid polypeptide reads, in one-letter code: Indole-3-glycerol phosphate synthase (260 aa).

The protein belongs to the TrpC family.

The enzyme catalyses 1-(2-carboxyphenylamino)-1-deoxy-D-ribulose 5-phosphate + H(+) = (1S,2R)-1-C-(indol-3-yl)glycerol 3-phosphate + CO2 + H2O. The protein operates within amino-acid biosynthesis; L-tryptophan biosynthesis; L-tryptophan from chorismate: step 4/5. The sequence is that of Indole-3-glycerol phosphate synthase from Ruminiclostridium cellulolyticum (strain ATCC 35319 / DSM 5812 / JCM 6584 / H10) (Clostridium cellulolyticum).